Here is a 230-residue protein sequence, read N- to C-terminus: Stachydrine N-demethylase reductase subunit Stc3 (230 aa).

This sequence belongs to the non-flavoprotein flavin reductase family. In terms of assembly, the system is probably composed of an oxygenase subunit (Stc2) and two reductase subunits (Stc3 and Stc4).

Its function is as follows. Reductase involved in the catabolism of stachydrine (L-proline betaine), a source of carbon and nitrogen. Part of a Rieske-type oxygenase system that catalyzes the demethylation of stachydrine to produce N-methyl-L-proline (monomethylproline). This subunit is probably involved in the transfer of electrons from NAD(P)H to the catalytic subunit Stc2. The polypeptide is Stachydrine N-demethylase reductase subunit Stc3 (Rhizobium meliloti (strain 1021) (Ensifer meliloti)).